The primary structure comprises 312 residues: Beta-ketoacyl-[acyl-carrier-protein] synthase III 1 (312 aa).

Catalysis depends on residues C113 and H237. The segment at 238-242 is ACP-binding; sequence QANIR. N267 is an active-site residue.

Belongs to the thiolase-like superfamily. FabH family. Homodimer.

It localises to the cytoplasm. It carries out the reaction malonyl-[ACP] + acetyl-CoA + H(+) = 3-oxobutanoyl-[ACP] + CO2 + CoA. Its pathway is lipid metabolism; fatty acid biosynthesis. Its function is as follows. Catalyzes the condensation reaction of fatty acid synthesis by the addition to an acyl acceptor of two carbons from malonyl-ACP. Catalyzes the first condensation reaction which initiates fatty acid synthesis and may therefore play a role in governing the total rate of fatty acid production. Possesses both acetoacetyl-ACP synthase and acetyl transacylase activities. Its substrate specificity determines the biosynthesis of branched-chain and/or straight-chain of fatty acids. In Halalkalibacterium halodurans (strain ATCC BAA-125 / DSM 18197 / FERM 7344 / JCM 9153 / C-125) (Bacillus halodurans), this protein is Beta-ketoacyl-[acyl-carrier-protein] synthase III 1.